We begin with the raw amino-acid sequence, 381 residues long: Cytochrome b (381 aa).

Transmembrane regions (helical) follow at residues 34–54 (FGSL…FLAM), 78–99 (WLIR…YLHI), 114–134 (WNIG…GYVL), and 179–199 (FFAF…LHFL). Positions 84 and 98 each coordinate heme b. The heme b site is built by His-183 and His-197. His-202 contacts a ubiquinone. The next 4 membrane-spanning stretches (helical) occupy residues 227–247 (YKDI…VLFL), 289–309 (LGGV…PFLH), 321–341 (LTQL…WIGG), and 348–368 (FIFI…IITP).

Belongs to the cytochrome b family. As to quaternary structure, the cytochrome bc1 complex contains 3 respiratory subunits (MT-CYB, CYC1 and UQCRFS1), 2 core proteins (UQCRC1 and UQCRC2) and probably 6 low-molecular weight proteins. The cofactor is heme b.

The protein localises to the mitochondrion inner membrane. Component of the ubiquinol-cytochrome c reductase complex (complex III or cytochrome b-c1 complex) that is part of the mitochondrial respiratory chain. The b-c1 complex mediates electron transfer from ubiquinol to cytochrome c. Contributes to the generation of a proton gradient across the mitochondrial membrane that is then used for ATP synthesis. This is Cytochrome b (mt-cyb) from Heterodontus francisci (Horn shark).